The sequence spans 177 residues: Late embryogenesis abundant protein 1 (177 aa).

Residues 1–177 (MASHDQSYKA…DKDHFPTNRH (177 aa)) are disordered. A compositionally biased stretch (basic and acidic residues) spans 28–39 (IEDKAQAAKEKA). Residues 40–89 (QQAAQTAKDKTSQTAQAAKEKTQQTAQAAKEKTQQTAQAAKDETQQTAQA) show a composition bias toward low complexity. 4 consecutive repeat copies span residues 53–63 (TAQAAKEKTQQ), 64–74 (TAQAAKEKTQQ), 75–85 (TAQAAKDETQQ), and 86–96 (TAQAAKDKTQQ). Positions 53-96 (TAQAAKEKTQQTAQAAKEKTQQTAQAAKDETQQTAQAAKDKTQQ) are 4 X 11 AA approximate tandem repeats of T-A-Q-A-A-K-E-K-T-Q-Q. The segment covering 90-117 (AKDKTQQTTEATKEKAQDTTGRAREKGS) has biased composition (basic and acidic residues). Residues 119-142 (MGQSTKETAQSGKDNSAGFLQQTG) show a composition bias toward polar residues. Residues 164-177 (NDDKDKDHFPTNRH) are compositionally biased toward basic and acidic residues.

Belongs to the LEA type 4 family. As to expression, highest expression is found in seeds. No expression detected in adult tissues.

The sequence is that of Late embryogenesis abundant protein 1 from Cicer arietinum (Chickpea).